Consider the following 173-residue polypeptide: Ribosome maturation factor RimM (173 aa).

One can recognise a PRC barrel domain in the interval 95–169 (DPDEFYDHQL…VIEIDPPEGL (75 aa)).

Belongs to the RimM family. Binds ribosomal protein uS19.

It localises to the cytoplasm. In terms of biological role, an accessory protein needed during the final step in the assembly of 30S ribosomal subunit, possibly for assembly of the head region. Essential for efficient processing of 16S rRNA. May be needed both before and after RbfA during the maturation of 16S rRNA. It has affinity for free ribosomal 30S subunits but not for 70S ribosomes. The protein is Ribosome maturation factor RimM of Mycobacteroides abscessus (strain ATCC 19977 / DSM 44196 / CCUG 20993 / CIP 104536 / JCM 13569 / NCTC 13031 / TMC 1543 / L948) (Mycobacterium abscessus).